The chain runs to 338 residues: Phenylalanine--tRNA ligase alpha subunit (338 aa).

Glu252 lines the Mg(2+) pocket.

It belongs to the class-II aminoacyl-tRNA synthetase family. Phe-tRNA synthetase alpha subunit type 1 subfamily. As to quaternary structure, tetramer of two alpha and two beta subunits. The cofactor is Mg(2+).

It localises to the cytoplasm. The enzyme catalyses tRNA(Phe) + L-phenylalanine + ATP = L-phenylalanyl-tRNA(Phe) + AMP + diphosphate + H(+). This chain is Phenylalanine--tRNA ligase alpha subunit, found in Azotobacter vinelandii (strain DJ / ATCC BAA-1303).